Reading from the N-terminus, the 309-residue chain is NADH-cytochrome b5 reductase 1 (309 aa).

Residues 31–51 traverse the membrane as a helical segment; that stretch reads DWVVYSVALALALGTWKFFQL. In terms of domain architecture, FAD-binding FR-type spans 60–168; the sequence is TKFQEFELKE…RGPKGAFVYQ (109 aa). FAD contacts are provided by residues 148-163 and 174-208; these read AGLS…GPKG and HFGM…QVDL.

The protein belongs to the flavoprotein pyridine nucleotide cytochrome reductase family. Monomer. Component of the 2-(3-amino-3-carboxypropyl)histidine synthase complex composed of DPH1, DPH2, DPH3 and a NADH-dependent reductase, predominantly CBR1. FAD is required as a cofactor.

Its subcellular location is the mitochondrion outer membrane. It carries out the reaction 2 Fe(III)-[cytochrome b5] + NADH = 2 Fe(II)-[cytochrome b5] + NAD(+) + H(+). The enzyme catalyses 2 Fe(3+)-[Dph3] + NADH = 2 Fe(2+)-[Dph3] + NAD(+) + H(+). The protein operates within protein modification; peptidyl-diphthamide biosynthesis. Its function is as follows. NADH-dependent reductase for DPH3 and cytochrome b5. Required for the first step of diphthamide biosynthesis, a post-translational modification of histidine which occurs in elongation factor 2. DPH1 and DPH2 transfer a 3-amino-3-carboxypropyl (ACP) group from S-adenosyl-L-methionine (SAM) to a histidine residue, the reaction is assisted by a reduction system comprising DPH3 and a NADH-dependent reductase, predominantly CBR1. By reducing DPH3, also involved in the formation of the tRNA wobble base modification mcm5s 2U (5-methoxycarbonylmethyl-2-thiouridine), mediated by the elongator complex. The cytochrome b5/NADH cytochrome b5 reductase electron transfer system supports the catalytic activity of several sterol biosynthetic enzymes. In Pyricularia oryzae (strain 70-15 / ATCC MYA-4617 / FGSC 8958) (Rice blast fungus), this protein is NADH-cytochrome b5 reductase 1 (CBR1).